A 545-amino-acid chain; its full sequence is Chaperonin GroEL (545 aa).

ATP contacts are provided by residues 30-33 (TLGP), K51, 87-91 (DGTTT), G415, and D495.

It belongs to the chaperonin (HSP60) family. Forms a cylinder of 14 subunits composed of two heptameric rings stacked back-to-back. Interacts with the co-chaperonin GroES.

It localises to the cytoplasm. It carries out the reaction ATP + H2O + a folded polypeptide = ADP + phosphate + an unfolded polypeptide.. Together with its co-chaperonin GroES, plays an essential role in assisting protein folding. The GroEL-GroES system forms a nano-cage that allows encapsulation of the non-native substrate proteins and provides a physical environment optimized to promote and accelerate protein folding. The chain is Chaperonin GroEL from Shewanella amazonensis (strain ATCC BAA-1098 / SB2B).